Consider the following 459-residue polypeptide: Ribulose bisphosphate carboxylase large chain (459 aa).

Residues 1-2 (MS) constitute a propeptide that is removed on maturation. The residue at position 3 (P3) is an N-acetylproline. The residue at position 14 (K14) is an N6,N6,N6-trimethyllysine. Substrate contacts are provided by X123 and T173. K175 serves as the catalytic Proton acceptor. K177 serves as a coordination point for substrate. 3 residues coordinate Mg(2+): K201, D203, and E204. K201 carries the N6-carboxylysine modification. H294 acts as the Proton acceptor in catalysis. Residues R295, H327, and S379 each contribute to the substrate site.

It belongs to the RuBisCO large chain family. Type I subfamily. As to quaternary structure, heterohexadecamer of 8 large chains and 8 small chains; disulfide-linked. The disulfide link is formed within the large subunit homodimers. Requires Mg(2+) as cofactor. Post-translationally, the disulfide bond which can form in the large chain dimeric partners within the hexadecamer appears to be associated with oxidative stress and protein turnover.

It localises to the plastid. It is found in the chloroplast. It carries out the reaction 2 (2R)-3-phosphoglycerate + 2 H(+) = D-ribulose 1,5-bisphosphate + CO2 + H2O. The enzyme catalyses D-ribulose 1,5-bisphosphate + O2 = 2-phosphoglycolate + (2R)-3-phosphoglycerate + 2 H(+). Functionally, ruBisCO catalyzes two reactions: the carboxylation of D-ribulose 1,5-bisphosphate, the primary event in carbon dioxide fixation, as well as the oxidative fragmentation of the pentose substrate in the photorespiration process. Both reactions occur simultaneously and in competition at the same active site. The protein is Ribulose bisphosphate carboxylase large chain of Corynocarpus laevigatus (New Zealand laurel).